Consider the following 23-residue polypeptide: Aurein-4.2 (23 aa).

Belongs to the frog skin active peptide (FSAP) family. Aurein subfamily. As to expression, expressed by the skin dorsal glands.

It localises to the secreted. Functionally, has no antimicrobial or anticancer activity. This is Aurein-4.2 from Ranoidea aurea (Green and golden bell frog).